The chain runs to 101 residues: Protein Tat (101 aa).

The tract at residues 1-20 (MEPVDPNLEPWKHPGSQPTT) is disordered. Positions 1-24 (MEPVDPNLEPWKHPGSQPTTACSN) are interaction with human CREBBP. The tract at residues 1 to 48 (MEPVDPNLEPWKHPGSQPTTACSNCYCKVCCWHCQLCFLKKGLGISYG) is transactivation. 3 residues coordinate Zn(2+): cysteine 22, cysteine 25, and cysteine 27. Residues 22–37 (CSNCYCKVCCWHCQLC) form a cysteine-rich region. The residue at position 28 (lysine 28) is an N6-acetyllysine; by host PCAF. Positions 30, 33, 34, and 37 each coordinate Zn(2+). Positions 38–48 (FLKKGLGISYG) are core. Positions 48-101 (GKKKRKPRRGPPQGSKDHQTLIPKQPLPQSQRVSAGQEESKKKVESKAKTDRFA) are disordered. The short motif at 49–57 (KKKRKPRRG) is the Nuclear localization signal, RNA-binding (TAR), and protein transduction element. Positions 49 to 86 (KKKRKPRRGPPQGSKDHQTLIPKQPLPQSQRVSAGQEE) are interaction with the host capping enzyme RNGTT. 2 positions are modified to N6-acetyllysine; by host EP300 and GCN5L2: lysine 50 and lysine 51. Arginine 52 is modified (asymmetric dimethylarginine; by host PRMT6). Lysine 71 participates in a covalent cross-link: Glycyl lysine isopeptide (Lys-Gly) (interchain with G-Cter in ubiquitin). Residues 85-101 (EESKKKVESKAKTDRFA) show a composition bias toward basic and acidic residues.

This sequence belongs to the lentiviruses Tat family. Interacts with host CCNT1. Associates with the P-TEFb complex composed at least of Tat, P-TEFb (CDK9 and CCNT1), TAR RNA, RNA Pol II. Recruits the HATs CREBBP, TAF1/TFIID, EP300, PCAF and GCN5L2. Interacts with host KAT5/Tip60; this interaction targets the latter to degradation. Interacts with the host deacetylase SIRT1. Interacts with host capping enzyme RNGTT; this interaction stimulates RNGTT. Binds to host KDR, and to the host integrins ITGAV/ITGB3 and ITGA5/ITGB1. Interacts with host KPNB1/importin beta-1 without previous binding to KPNA1/importin alpha-1. Interacts with EIF2AK2. Interacts with host nucleosome assembly protein NAP1L1; this interaction may be required for the transport of Tat within the nucleus, since the two proteins interact at the nuclear rim. Interacts with host C1QBP/SF2P32; this interaction involves lysine-acetylated Tat. Interacts with the host chemokine receptors CCR2, CCR3 and CXCR4. Interacts with host DPP4/CD26; this interaction may trigger an anti-proliferative effect. Interacts with host LDLR. Interacts with the host extracellular matrix metalloproteinase MMP1. Interacts with host PRMT6; this interaction mediates Tat's methylation. Interacts with, and is ubiquitinated by MDM2/Hdm2. Interacts with host PSMC3 and HTATIP2. Interacts with STAB1; this interaction may overcome SATB1-mediated repression of IL2 and IL2RA (interleukin) in T cells by binding to the same domain than HDAC1. Interacts (when acetylated) with human CDK13, thereby increasing HIV-1 mRNA splicing and promoting the production of the doubly spliced HIV-1 protein Nef. Interacts with host TBP; this interaction modulates the activity of transcriptional pre-initiation complex. Interacts with host RELA. Interacts with host PLSCR1; this interaction negatively regulates Tat transactivation activity by altering its subcellular distribution. Asymmetrical arginine methylation by host PRMT6 seems to diminish the transactivation capacity of Tat and affects the interaction with host CCNT1. In terms of processing, acetylation by EP300, CREBBP, GCN5L2/GCN5 and PCAF regulates the transactivation activity of Tat. EP300-mediated acetylation of Lys-50 promotes dissociation of Tat from the TAR RNA through the competitive binding to PCAF's bromodomain. In addition, the non-acetylated Tat's N-terminus can also interact with PCAF. PCAF-mediated acetylation of Lys-28 enhances Tat's binding to CCNT1. Lys-50 is deacetylated by SIRT1. Post-translationally, polyubiquitination by host MDM2 does not target Tat to degradation, but activates its transactivation function and fosters interaction with CCNT1 and TAR RNA. Phosphorylated by EIF2AK2 on serine and threonine residues adjacent to the basic region important for TAR RNA binding and function. Phosphorylation of Tat by EIF2AK2 is dependent on the prior activation of EIF2AK2 by dsRNA.

The protein resides in the host nucleus. It localises to the host nucleolus. It is found in the host cytoplasm. The protein localises to the secreted. Transcriptional activator that increases RNA Pol II processivity, thereby increasing the level of full-length viral transcripts. Recognizes a hairpin structure at the 5'-LTR of the nascent viral mRNAs referred to as the transactivation responsive RNA element (TAR) and recruits the cyclin T1-CDK9 complex (P-TEFb complex) that will in turn hyperphosphorylate the RNA polymerase II to allow efficient elongation. The CDK9 component of P-TEFb and other Tat-activated kinases hyperphosphorylate the C-terminus of RNA Pol II that becomes stabilized and much more processive. Other factors such as HTATSF1/Tat-SF1, SUPT5H/SPT5, and HTATIP2 are also important for Tat's function. Besides its effect on RNA Pol II processivity, Tat induces chromatin remodeling of proviral genes by recruiting the histone acetyltransferases (HATs) CREBBP, EP300 and PCAF to the chromatin. This also contributes to the increase in proviral transcription rate, especially when the provirus integrates in transcriptionally silent region of the host genome. To ensure maximal activation of the LTR, Tat mediates nuclear translocation of NF-kappa-B by interacting with host RELA. Through its interaction with host TBP, Tat may also modulate transcription initiation. Tat can reactivate a latently infected cell by penetrating in it and transactivating its LTR promoter. In the cytoplasm, Tat is thought to act as a translational activator of HIV-1 mRNAs. Functionally, extracellular circulating Tat can be endocytosed by surrounding uninfected cells via the binding to several surface receptors such as CD26, CXCR4, heparan sulfate proteoglycans (HSPG) or LDLR. Neurons are rarely infected, but they internalize Tat via their LDLR. Through its interaction with nuclear HATs, Tat is potentially able to control the acetylation-dependent cellular gene expression. Modulates the expression of many cellular genes involved in cell survival, proliferation or in coding for cytokines or cytokine receptors. Tat plays a role in T-cell and neurons apoptosis. Tat induced neurotoxicity and apoptosis probably contribute to neuroAIDS. Circulating Tat also acts as a chemokine-like and/or growth factor-like molecule that binds to specific receptors on the surface of the cells, affecting many cellular pathways. In the vascular system, Tat binds to ITGAV/ITGB3 and ITGA5/ITGB1 integrins dimers at the surface of endothelial cells and competes with bFGF for heparin-binding sites, leading to an excess of soluble bFGF. In Human immunodeficiency virus type 1 group M subtype A (isolate U455) (HIV-1), this protein is Protein Tat.